The chain runs to 570 residues: Putative ABC transporter ATP-binding protein SAV2684 (570 aa).

ABC transporter domains follow at residues 6–247 (ISFK…GIRE) and 304–537 (LELN…ASLR). ATP-binding positions include 40-47 (GASGSGKS) and 338-345 (GHNGAGKS).

Belongs to the ABC transporter superfamily.

It localises to the cell membrane. Probably part of an ABC transporter complex. Responsible for energy coupling to the transport system. The polypeptide is Putative ABC transporter ATP-binding protein SAV2684 (Staphylococcus aureus (strain Mu50 / ATCC 700699)).